We begin with the raw amino-acid sequence, 159 residues long: Endoribonuclease YbeY (159 aa).

The Zn(2+) site is built by His125, His129, and His135.

This sequence belongs to the endoribonuclease YbeY family. Requires Zn(2+) as cofactor.

Its subcellular location is the cytoplasm. Functionally, single strand-specific metallo-endoribonuclease involved in late-stage 70S ribosome quality control and in maturation of the 3' terminus of the 16S rRNA. This is Endoribonuclease YbeY from Brevibacillus brevis (strain 47 / JCM 6285 / NBRC 100599).